A 63-amino-acid polypeptide reads, in one-letter code: Large ribosomal subunit protein bL28 (63 aa).

This sequence belongs to the bacterial ribosomal protein bL28 family.

The polypeptide is Large ribosomal subunit protein bL28 (Clostridium acetobutylicum (strain ATCC 824 / DSM 792 / JCM 1419 / IAM 19013 / LMG 5710 / NBRC 13948 / NRRL B-527 / VKM B-1787 / 2291 / W)).